The chain runs to 199 residues: MAISKNLPILKNHFRKHWQERVKVHFDQAGKKVSRRNARAARAAKIAPRPLDLLRPVVRAPTVKYNRKVRAGRGFTLAEVKAAGLTAAYARTIGIAVDHRRQNRNQEIFDANVQRLKEYQSKIIVFPRDGKAPEAEQVLSAAATFPIAQPATDVEARAVQDNGESAFRTLRLARSEKKFRGIREKRAREKAEAEAEKKK.

Residues Thr144 and Thr152 each carry the phosphothreonine modification.

Belongs to the eukaryotic ribosomal protein eL13 family. As to quaternary structure, component of the large ribosomal subunit (LSU). Mature yeast ribosomes consist of a small (40S) and a large (60S) subunit. The 40S small subunit contains 1 molecule of ribosomal RNA (18S rRNA) and 33 different proteins (encoded by 57 genes). The large 60S subunit contains 3 rRNA molecules (25S, 5.8S and 5S rRNA) and 46 different proteins (encoded by 81 genes).

It is found in the cytoplasm. In terms of biological role, component of the ribosome, a large ribonucleoprotein complex responsible for the synthesis of proteins in the cell. The small ribosomal subunit (SSU) binds messenger RNAs (mRNAs) and translates the encoded message by selecting cognate aminoacyl-transfer RNA (tRNA) molecules. The large subunit (LSU) contains the ribosomal catalytic site termed the peptidyl transferase center (PTC), which catalyzes the formation of peptide bonds, thereby polymerizing the amino acids delivered by tRNAs into a polypeptide chain. The nascent polypeptides leave the ribosome through a tunnel in the LSU and interact with protein factors that function in enzymatic processing, targeting, and the membrane insertion of nascent chains at the exit of the ribosomal tunnel. In Saccharomyces cerevisiae (strain ATCC 204508 / S288c) (Baker's yeast), this protein is Large ribosomal subunit protein eL13B.